The following is a 119-amino-acid chain: MISKPDKNKTRQKRHTRVRGKISGTADCPRLNVFRSNKNIYAQLIDDVAGVTLASASTLDKEVKVEGTKVEQAQQVGALVAQRAVKAGHKVVVFDRGGYLYHGRIAALATAARENGLEF.

The interval 1 to 20 (MISKPDKNKTRQKRHTRVRG) is disordered. Residues 10 to 20 (TRQKRHTRVRG) show a composition bias toward basic residues.

The protein belongs to the universal ribosomal protein uL18 family. As to quaternary structure, part of the 50S ribosomal subunit; part of the 5S rRNA/L5/L18/L25 subcomplex. Contacts the 5S and 23S rRNAs.

In terms of biological role, this is one of the proteins that bind and probably mediate the attachment of the 5S RNA into the large ribosomal subunit, where it forms part of the central protuberance. This chain is Large ribosomal subunit protein uL18, found in Latilactobacillus sakei subsp. sakei (strain 23K) (Lactobacillus sakei subsp. sakei).